Here is a 342-residue protein sequence, read N- to C-terminus: Photosystem II assembly lipoprotein Ycf48 (342 aa).

Positions 1-28 (MPVKFPSLKFEQLKQLVLVAAIAVFCVS) are cleaved as a signal peptide. Cys29 is lipidated: N-palmitoyl cysteine. Cys29 carries the S-diacylglycerol cysteine lipid modification. An Arg-rich patch motif is present at residues 196–220 (RGNFYSTWAPGQTEWTPHNRNSSRR). A propeptide spanning residues 340-342 (MVP) is cleaved from the precursor.

This sequence belongs to the Ycf48 family. Part of early PSII assembly complexes which includes D1 (psbA) and PsbI; not found in mature PSII. By two-hybrid analysis in yeast interacts with precursor and intermediate forms of D1, but less with mature D1. Binds to the lumenal side of PSI and PSII complexes. Coimmunoprecipitates with YidC. Purified chlorophyll- and carotenoid-containing photosystem II (PSII) assembly intermediate complex RCII* (iD1, D1, D2, PsbE, PsbF, PsbI, Ycf39, Ycf48, HliC and HliD). In terms of processing, the last 3 residues are removed in the mature protein.

It is found in the cellular thylakoid membrane. Its function is as follows. A factor required for optimal assembly of photosystem II (PSII) which acts in the early stages of PSII assembly. Also plays a role in replacement of photodamaged D1 (psbA). May interact with precursor D1 to prevent its premature processing before association with D2 (psbD). May also play a role in chlorophyll insertion into chlorophyll-binding proteins. Increasing levels of chlorophyll precursors partially suppresses deletion of this protein, supporting the idea that Ycf48 assists YidC in synthesis of chlorophyll-binding proteins. The Ycf39-Hlip complex binds D1 at an early stage of PSII assembly along with Ycf48, ribosomes and ChlG, the last enzyme in chlorophyll biosynthesis; it may be involved in chlorophyll reuse and delivery to D1 in the initial stages of PSII assembly. The protein is Photosystem II assembly lipoprotein Ycf48 of Synechocystis sp. (strain ATCC 27184 / PCC 6803 / Kazusa).